Consider the following 185-residue polypeptide: Ribosome-recycling factor (185 aa).

Belongs to the RRF family.

It is found in the cytoplasm. Its function is as follows. Responsible for the release of ribosomes from messenger RNA at the termination of protein biosynthesis. May increase the efficiency of translation by recycling ribosomes from one round of translation to another. The protein is Ribosome-recycling factor of Pseudomonas paraeruginosa (strain DSM 24068 / PA7) (Pseudomonas aeruginosa (strain PA7)).